Here is a 461-residue protein sequence, read N- to C-terminus: Fumarate hydratase class II (461 aa).

Residues 97-99, 127-130, 137-139, and T185 each bind substrate; these read SGT, HPND, and SSN. H186 (proton donor/acceptor) is an active-site residue. Residue S316 is part of the active site. Substrate is bound by residues S317 and 322–324; that span reads KVN.

Belongs to the class-II fumarase/aspartase family. Fumarase subfamily. As to quaternary structure, homotetramer.

The protein localises to the cytoplasm. The enzyme catalyses (S)-malate = fumarate + H2O. It functions in the pathway carbohydrate metabolism; tricarboxylic acid cycle; (S)-malate from fumarate: step 1/1. In terms of biological role, involved in the TCA cycle. Catalyzes the stereospecific interconversion of fumarate to L-malate. The chain is Fumarate hydratase class II from Oceanobacillus iheyensis (strain DSM 14371 / CIP 107618 / JCM 11309 / KCTC 3954 / HTE831).